The sequence spans 147 residues: Hemoglobin subunit beta (147 aa).

Position 2 is an N-acetylvaline (Val-2). The Globin domain maps to 3 to 147 (HLTGEEKGIV…VATALAHKYH (145 aa)). Position 13 is a phosphothreonine (Thr-13). Ser-45 carries the post-translational modification Phosphoserine. Lys-60 is modified (N6-acetyllysine). His-64 provides a ligand contact to heme b. Lys-83 carries the post-translational modification N6-acetyllysine. His-93 lines the heme b pocket. Cys-94 bears the S-nitrosocysteine mark. Lys-145 carries the post-translational modification N6-acetyllysine.

This sequence belongs to the globin family. As to quaternary structure, heterotetramer of two alpha chains and two beta chains. As to expression, red blood cells.

Involved in oxygen transport from the lung to the various peripheral tissues. The chain is Hemoglobin subunit beta (HBB) from Rhinolophus ferrumequinum (Greater horseshoe bat).